Here is a 353-residue protein sequence, read N- to C-terminus: Alcohol dehydrogenase 1 (353 aa).

The Zn(2+) site is built by Cys47, His70, Cys101, Cys104, Cys107, Cys115, and Cys157. NAD(+) is bound by residues 181-187 (GAGGGLG), Asp205, Lys210, 274-276 (IGL), and Arg346.

This sequence belongs to the zinc-containing alcohol dehydrogenase family. In terms of assembly, homotetramer. The cofactor is Zn(2+).

The protein resides in the cytoplasm. It carries out the reaction a primary alcohol + NAD(+) = an aldehyde + NADH + H(+). It catalyses the reaction a secondary alcohol + NAD(+) = a ketone + NADH + H(+). This chain is Alcohol dehydrogenase 1 (adh-1), found in Neurospora crassa (strain ATCC 24698 / 74-OR23-1A / CBS 708.71 / DSM 1257 / FGSC 987).